The chain runs to 391 residues: S-adenosylmethionine synthase (391 aa).

The disordered stretch occupies residues 1–20; the sequence is MPRSDYLFTSESVSEGHPDK. Histidine 17 contacts ATP. Aspartate 19 is a Mg(2+) binding site. K(+) is bound at residue glutamate 45. Residues glutamate 58 and glutamine 102 each coordinate L-methionine. A flexible loop region spans residues 102-112; that stretch reads QSADIAQGVDA. Residues 169 to 171, 235 to 236, aspartate 244, 250 to 251, alanine 267, and lysine 271 contribute to the ATP site; these read DAK, KF, and RK. Aspartate 244 contributes to the L-methionine binding site. Lysine 275 is a binding site for L-methionine.

This sequence belongs to the AdoMet synthase family. Homotetramer; dimer of dimers. It depends on Mg(2+) as a cofactor. Requires K(+) as cofactor.

It is found in the cytoplasm. The catalysed reaction is L-methionine + ATP + H2O = S-adenosyl-L-methionine + phosphate + diphosphate. It participates in amino-acid biosynthesis; S-adenosyl-L-methionine biosynthesis; S-adenosyl-L-methionine from L-methionine: step 1/1. Its function is as follows. Catalyzes the formation of S-adenosylmethionine (AdoMet) from methionine and ATP. The overall synthetic reaction is composed of two sequential steps, AdoMet formation and the subsequent tripolyphosphate hydrolysis which occurs prior to release of AdoMet from the enzyme. In Methylorubrum populi (strain ATCC BAA-705 / NCIMB 13946 / BJ001) (Methylobacterium populi), this protein is S-adenosylmethionine synthase.